We begin with the raw amino-acid sequence, 921 residues long: Glutamate receptor 3.7 (921 aa).

A signal peptide spans 1 to 25; the sequence is MGLGIDPSVAITALIVVILVVPMDC. At 26 to 580 the chain is on the extracellular side; that stretch reads QRPQLVNIGA…WIFLRPFTSR (555 aa). N214, N300, N330, N369, N396, N478, and N568 each carry an N-linked (GlcNAc...) asparagine glycan. Residues 581–601 form a helical membrane-spanning segment; the sequence is LWCVVLVSFLVIAVVIWILEH. Residues 602–608 lie on the Cytoplasmic side of the membrane; the sequence is RINEDFR. A helical membrane pass occupies residues 609 to 629; sequence GPPRRQLSTMLLFSFSTLFKR. At 630–640 the chain is on the cytoplasmic side; it reads NQEDTISNLAR. Residues 641–661 form a helical membrane-spanning segment; that stretch reads LVMIVWLFLLMVLTASYTANL. The Extracellular portion of the chain corresponds to 662 to 822; the sequence is TSILTVQQLP…PEPNQLHLKS (161 aa). Residues 823–843 form a helical membrane-spanning segment; sequence FKGLYLVCIAITVSAFLVFVL. Residues 844–921 lie on the Cytoplasmic side of the membrane; sequence RMIRQFVRYR…VQADTEVPRN (78 aa). Residues 896 to 921 are disordered; that stretch reads FRRSDDSNNNPSHVGEVQADTEVPRN.

The protein belongs to the glutamate-gated ion channel (TC 1.A.10.1) family. As to quaternary structure, may form heteromers. Expressed predominantly in leaves and siliques. Also detected in roots.

Its subcellular location is the membrane. Functionally, glutamate-gated receptor that probably acts as a non-selective cation channel. May be involved in light-signal transduction and calcium homeostasis via the regulation of calcium influx into cells. The polypeptide is Glutamate receptor 3.7 (GLR3.7) (Arabidopsis thaliana (Mouse-ear cress)).